A 274-amino-acid polypeptide reads, in one-letter code: F-actin-capping protein subunit alpha (274 aa).

It belongs to the F-actin-capping protein alpha subunit family. As to quaternary structure, heterodimer of an alpha and a beta subunit.

The protein localises to the cytoplasm. F-actin-capping proteins bind in a Ca(2+)-independent manner to the fast growing ends of actin filaments (barbed end) thereby blocking the exchange of subunits at these ends. Unlike other capping proteins (such as gelsolin and severin), these proteins do not sever actin filaments. This Chaetomium thermophilum (strain DSM 1495 / CBS 144.50 / IMI 039719) (Thermochaetoides thermophila) protein is F-actin-capping protein subunit alpha.